The primary structure comprises 237 residues: Tetraspanin-8 (237 aa).

Residues 1–9 lie on the Cytoplasmic side of the membrane; that stretch reads MAGVSACIK. Residues 10-33 form a helical membrane-spanning segment; that stretch reads YSMFTFNFLFWLCGILILALAIWV. Residues 34–57 are Extracellular-facing; the sequence is RVSNDSQAIFGSEDVGSSSYVAVD. Residues 58–72 form a helical membrane-spanning segment; the sequence is ILIAVGAIIMILGFL. Over 73-83 the chain is Cytoplasmic; the sequence is GCCGAIKESRC. Residues 84-109 traverse the membrane as a helical segment; the sequence is MLLLFFIGLLLILLLQVATGILGAVF. At 110-205 the chain is on the extracellular side; that stretch reads KSKSDRIVNE…SFIKDFLAKN (96 aa). Residue Asn-118 is glycosylated (N-linked (GlcNAc...) asparagine). Residues 206–230 traverse the membrane as a helical segment; that stretch reads LIIVIGISFGLAVIEILGLVFSMVL. Residues 231–237 lie on the Cytoplasmic side of the membrane; it reads YCQIGNK.

Belongs to the tetraspanin (TM4SF) family. As to quaternary structure, forms homooligomers. Interacts with MEP1B. Interacts with integrin alpha3/ITGA3. Interacts with RICTOR and MTOR. Interacts with ADAM17. Interacts with ECE1. As to expression, gastric, colon, rectal, and pancreatic carcinomas.

Its subcellular location is the cell membrane. Its function is as follows. Structural component of specialized membrane microdomains known as tetraspanin-enriched microdomains (TERMs), which act as platforms for receptor clustering and signaling. Participates thereby in diverse biological functions such as cell signal transduction, migration and protein trafficking. Promotes ADAM17-mediated TNF-alpha processing through recruitment of ADAM17 to tetraspanin-enriched micro-domains (TEMs). Forms a complex with RICTOR and integrin alpha3/ITGA3 to mediate mTORC2 activation and AKT1 phosphorylation leading to cell migration. Reduces apoptosis and autophagy induced by high glucose levels through forming a complex with mTOR and RICTOR. Contributes to the maintenance of intestinal epithelial barrier and plays a role in the regulation of intestine inflammation by switching interferon gamma receptor 1/IFNGR1 from clathrin-dependent to lipid raft-dependent endocytosis route to limit STAT1 activation magnitude and duration. Acts as a modulator of the endothelin axis by associating with endothelin converting enzyme ECE1 and regulating its activity of conversion of the endothelin-1 precursor to endothelin. The polypeptide is Tetraspanin-8 (TSPAN8) (Homo sapiens (Human)).